We begin with the raw amino-acid sequence, 822 residues long: General transcription factor 3C polypeptide 4 (822 aa).

Met1 carries the post-translational modification N-acetylmethionine. Positions Met1–Pro41 are disordered. The residue at position 19 (Ser19) is a Phosphoserine. Lys225 is covalently cross-linked (Glycyl lysine isopeptide (Lys-Gly) (interchain with G-Cter in SUMO2)). 2 positions are modified to phosphoserine: Ser604 and Ser611. Positions Leu608 to Glu663 are disordered. Residue Lys629 forms a Glycyl lysine isopeptide (Lys-Gly) (interchain with G-Cter in SUMO2) linkage. At Ser652 the chain carries Phosphoserine.

This sequence belongs to the TFIIIC subunit 4 family. In terms of assembly, part of the TFIIIC subcomplex TFIIIC2, consisting of six subunits, GTF3C1, GTF3C2, GTF3C3, GTF3C4, GTF3C5 and GTF3C6. Interacts with BRF1, GTF3C1, GTF3C2, GTF3C5, GTF3C6, POLR3C and POLR3F.

The protein localises to the nucleus. It carries out the reaction L-lysyl-[protein] + acetyl-CoA = N(6)-acetyl-L-lysyl-[protein] + CoA + H(+). Its function is as follows. Essential for RNA polymerase III to make a number of small nuclear and cytoplasmic RNAs, including 5S RNA, tRNA, and adenovirus-associated (VA) RNA of both cellular and viral origin. Has histone acetyltransferase activity (HAT) with unique specificity for free and nucleosomal H3. May cooperate with GTF3C5 in facilitating the recruitment of TFIIIB and RNA polymerase through direct interactions with BRF1, POLR3C and POLR3F. May be localized close to the A box. The polypeptide is General transcription factor 3C polypeptide 4 (GTF3C4) (Homo sapiens (Human)).